Reading from the N-terminus, the 435-residue chain is Nuclear hormone receptor family member nhr-136 (435 aa).

The nuclear receptor DNA-binding region spans 50–129 (PSNCKVCRHS…AGMNPSAIQA (80 aa)). 2 consecutive NR C4-type zinc fingers follow at residues 53 to 73 (CKVC…CNGC) and 89 to 112 (CLKM…CRAC). One can recognise an NR LBD domain in the interval 194–430 (RDIRKLDELI…RYTRISNLYE (237 aa)).

The protein belongs to the nuclear hormone receptor family.

The protein localises to the nucleus. Functionally, orphan nuclear receptor. This is Nuclear hormone receptor family member nhr-136 (nhr-136) from Caenorhabditis elegans.